Consider the following 448-residue polypeptide: MAEQHTGVGRQRGARPWPRPRRVATLSVHTSPLHQPGTGDAGGMNVYILEVARRLAEADVEVEIFTRATSADVPPVVEMMPGVHVRNIISGPLGGLTKEELPGQLCAFTAGVLRAEASRAAGHYDLIHSHYWLSGQVGWLAKERWGVPLVHTAHTLAKVKNAQLAAGDRPEPKARVIGEEQVVAEADRLVANTKTEAGDLIDRYDADPTRVEVVEPGVDLARFTPAAGDRSRAQALARRRLGLPERGYVVAFVGRVQPLKAPDVLIRAAAALRQRDPALAEELTVVVCGGPSGSGLDRPTHLIELAASLGVTDSVRFLPPQTGDDLPALYRAADLVAVPSYNESFGLVALEAQACGTPVVAAAVGGLVTAVRDQVSGVLVDGHDPAVWARTLSRLLPDTGLRATLAQGARRHACNFSWDRTVSGLLEVYGEAVAAYGPQSSELATCSC.

The disordered stretch occupies residues 1–21; that stretch reads MAEQHTGVGRQRGARPWPRPR. His29 provides a ligand contact to 1D-myo-inositol 3-phosphate. UDP-N-acetyl-alpha-D-glucosamine contacts are provided by residues 35–36 and Gly43; that span reads QP. 1D-myo-inositol 3-phosphate-binding positions include 40–45, Lys98, Tyr131, Thr155, and Arg175; that span reads DAGGMN. Residues Arg255, Lys260, and Gln321 each coordinate UDP-N-acetyl-alpha-D-glucosamine. The Mg(2+) site is built by Tyr330, Arg331, and Ala333. Residues Glu343 and Glu351 each contribute to the UDP-N-acetyl-alpha-D-glucosamine site. A Mg(2+)-binding site is contributed by Thr357.

Belongs to the glycosyltransferase group 1 family. MshA subfamily. Homodimer.

It catalyses the reaction 1D-myo-inositol 3-phosphate + UDP-N-acetyl-alpha-D-glucosamine = 1D-myo-inositol 2-acetamido-2-deoxy-alpha-D-glucopyranoside 3-phosphate + UDP + H(+). In terms of biological role, catalyzes the transfer of a N-acetyl-glucosamine moiety to 1D-myo-inositol 3-phosphate to produce 1D-myo-inositol 2-acetamido-2-deoxy-glucopyranoside 3-phosphate in the mycothiol biosynthesis pathway. The sequence is that of D-inositol 3-phosphate glycosyltransferase from Salinispora arenicola (strain CNS-205).